Consider the following 306-residue polypeptide: N-acetylmuramic acid 6-phosphate etherase (306 aa).

The SIS domain maps to 59-222 (TSQALAKGGR…STGTMVMLGK (164 aa)). Glu87 (proton donor) is an active-site residue. Glu118 is a catalytic residue.

Belongs to the GCKR-like family. MurNAc-6-P etherase subfamily. As to quaternary structure, homodimer.

The enzyme catalyses N-acetyl-D-muramate 6-phosphate + H2O = N-acetyl-D-glucosamine 6-phosphate + (R)-lactate. It functions in the pathway amino-sugar metabolism; N-acetylmuramate degradation. Functionally, specifically catalyzes the cleavage of the D-lactyl ether substituent of MurNAc 6-phosphate, producing GlcNAc 6-phosphate and D-lactate. This Microcystis aeruginosa (strain NIES-843 / IAM M-2473) protein is N-acetylmuramic acid 6-phosphate etherase.